Reading from the N-terminus, the 539-residue chain is Chaperonin GroEL 1 (539 aa).

Residues 29-32 (TLGP), 86-90 (DGTTT), Gly413, 478-480 (NAA), and Asp494 each bind ATP.

This sequence belongs to the chaperonin (HSP60) family. As to quaternary structure, forms a cylinder of 14 subunits composed of two heptameric rings stacked back-to-back. Interacts with the co-chaperonin GroES.

Its subcellular location is the cytoplasm. The catalysed reaction is ATP + H2O + a folded polypeptide = ADP + phosphate + an unfolded polypeptide.. Together with its co-chaperonin GroES, plays an essential role in assisting protein folding. The GroEL-GroES system forms a nano-cage that allows encapsulation of the non-native substrate proteins and provides a physical environment optimized to promote and accelerate protein folding. This chain is Chaperonin GroEL 1, found in Corynebacterium diphtheriae (strain ATCC 700971 / NCTC 13129 / Biotype gravis).